A 266-amino-acid chain; its full sequence is Glucosamine-6-phosphate deaminase (266 aa).

Asp72 serves as the catalytic Proton acceptor; for enolization step. The For ring-opening step role is filled by Asp141. Catalysis depends on His143, which acts as the Proton acceptor; for ring-opening step. Catalysis depends on Glu148, which acts as the For ring-opening step.

This sequence belongs to the glucosamine/galactosamine-6-phosphate isomerase family. NagB subfamily. In terms of assembly, homohexamer; trimer of disulfide-linked dimers.

The catalysed reaction is alpha-D-glucosamine 6-phosphate + H2O = beta-D-fructose 6-phosphate + NH4(+). It participates in amino-sugar metabolism; N-acetylneuraminate degradation; D-fructose 6-phosphate from N-acetylneuraminate: step 5/5. Its activity is regulated as follows. Allosterically activated by N-acetylglucosamine 6-phosphate (GlcNAc6P). In terms of biological role, catalyzes the reversible isomerization-deamination of glucosamine 6-phosphate (GlcN6P) to form fructose 6-phosphate (Fru6P) and ammonium ion. The protein is Glucosamine-6-phosphate deaminase of Shigella dysenteriae serotype 1 (strain Sd197).